Here is a 308-residue protein sequence, read N- to C-terminus: D-alanine--D-alanine ligase B (308 aa).

The ATP-grasp domain occupies 102–302 (KKVAAAAGVV…FAELLSWMVE (201 aa)). 128 to 183 (PMKPPYVVKPVREGSSFGVVIVKEDQPHPPQVIGSADWKYGDEVMVEGYIAGRELT) provides a ligand contact to ATP. Mg(2+) is bound by residues aspartate 252, glutamate 269, and asparagine 271.

This sequence belongs to the D-alanine--D-alanine ligase family. Requires Mg(2+) as cofactor. Mn(2+) serves as cofactor.

The protein resides in the cytoplasm. The enzyme catalyses 2 D-alanine + ATP = D-alanyl-D-alanine + ADP + phosphate + H(+). The protein operates within cell wall biogenesis; peptidoglycan biosynthesis. Cell wall formation. This is D-alanine--D-alanine ligase B from Brucella suis biovar 1 (strain 1330).